Consider the following 184-residue polypeptide: Protein MEH1 (184 aa).

Gly2 is lipidated: N-myristoyl glycine. S-palmitoyl cysteine attachment occurs at residues Cys7 and Cys8. Positions 30–71 (QGNANDEYDAEQMRLKEHEHEQKLLAREQELRDIVANTNDKL) form a coiled coil. The segment at 89–147 (LQEALDKRQQEEGGDSREDERSAGDDNLSGHSVPSSGSAQATTHQTAPRTNTFTLLTSP) is disordered. The span at 92-112 (ALDKRQQEEGGDSREDERSAG) shows a compositional bias: basic and acidic residues. A compositionally biased stretch (polar residues) spans 117–147 (SGHSVPSSGSAQATTHQTAPRTNTFTLLTSP). Phosphoserine is present on residues Ser146 and Ser149.

In terms of assembly, component of the GSE complex composed of GTR1, GTR2, SLM4, MEH1 and LTV1. Component of the EGO complex, at least composed of GTR2, SLM4 and MEH1.

It is found in the vacuole membrane. In terms of biological role, component of the GSE complex, a GTPase complex required for intracellular sorting of GAP1 out of the endosome. Component of the EGO complex, a complex involved in the regulation of microautophagy. In Saccharomyces cerevisiae (strain ATCC 204508 / S288c) (Baker's yeast), this protein is Protein MEH1 (MEH1).